A 686-amino-acid chain; its full sequence is DNA ligase 2 (686 aa).

NAD(+) contacts are provided by residues 37–41 (DDEYD), 86–87 (SL), and glutamate 121. Catalysis depends on lysine 123, which acts as the N6-AMP-lysine intermediate. Residues arginine 144, glutamate 179, lysine 295, and lysine 319 each contribute to the NAD(+) site. Residues cysteine 413, cysteine 416, cysteine 431, and cysteine 436 each contribute to the Zn(2+) site. One can recognise a BRCT domain in the interval 593–681 (VRGEQLAGLN…GVQLPGVQAS (89 aa)).

It belongs to the NAD-dependent DNA ligase family. LigA subfamily. The cofactor is Mg(2+). Mn(2+) serves as cofactor.

It catalyses the reaction NAD(+) + (deoxyribonucleotide)n-3'-hydroxyl + 5'-phospho-(deoxyribonucleotide)m = (deoxyribonucleotide)n+m + AMP + beta-nicotinamide D-nucleotide.. Functionally, DNA ligase that catalyzes the formation of phosphodiester linkages between 5'-phosphoryl and 3'-hydroxyl groups in double-stranded DNA using NAD as a coenzyme and as the energy source for the reaction. It is essential for DNA replication and repair of damaged DNA. The protein is DNA ligase 2 of Deinococcus deserti (strain DSM 17065 / CIP 109153 / LMG 22923 / VCD115).